The sequence spans 172 residues: Adenine phosphoribosyltransferase (172 aa).

Belongs to the purine/pyrimidine phosphoribosyltransferase family. In terms of assembly, homodimer.

It is found in the cytoplasm. It catalyses the reaction AMP + diphosphate = 5-phospho-alpha-D-ribose 1-diphosphate + adenine. It participates in purine metabolism; AMP biosynthesis via salvage pathway; AMP from adenine: step 1/1. Its function is as follows. Catalyzes a salvage reaction resulting in the formation of AMP, that is energically less costly than de novo synthesis. The polypeptide is Adenine phosphoribosyltransferase (Polynucleobacter asymbioticus (strain DSM 18221 / CIP 109841 / QLW-P1DMWA-1) (Polynucleobacter necessarius subsp. asymbioticus)).